A 666-amino-acid chain; its full sequence is Calpain-10 (666 aa).

The region spanning 13 to 321 (LFRDAAFPAS…FDEVTIGYPV (309 aa)) is the Calpain catalytic domain. Catalysis depends on residues cysteine 73, histidine 238, and asparagine 263. Domain III stretches follow at residues 322–488 (TEAG…ISLS) and 507–648 (EWET…IHSQ).

Belongs to the peptidase C2 family. Ubiquitous.

It is found in the cytoplasm. Its subcellular location is the nucleus. Functionally, calcium-regulated non-lysosomal thiol-protease which catalyzes limited proteolysis of substrates involved in cytoskeletal remodeling and signal transduction. May play a role in insulin-stimulated glucose uptake. The polypeptide is Calpain-10 (Capn10) (Rattus norvegicus (Rat)).